A 111-amino-acid chain; its full sequence is Cytochrome c oxidase subunit 6A1, mitochondrial (111 aa).

Residues Met-1–Met-26 constitute a mitochondrion transit peptide. At Ser-27–Ser-36 the chain is on the mitochondrial matrix side. A helical membrane pass occupies residues Ala-37–Leu-61. The Mitochondrial intermembrane segment spans residues Lys-62–Glu-111.

This sequence belongs to the cytochrome c oxidase subunit 6A family. In terms of assembly, component of the cytochrome c oxidase (complex IV, CIV), a multisubunit enzyme composed of 14 subunits. The complex is composed of a catalytic core of 3 subunits MT-CO1, MT-CO2 and MT-CO3, encoded in the mitochondrial DNA, and 11 supernumerary subunits COX4I, COX5A, COX5B, COX6A, COX6B, COX6C, COX7A, COX7B, COX7C, COX8 and NDUFA4, which are encoded in the nuclear genome. The complex exists as a monomer or a dimer and forms supercomplexes (SCs) in the inner mitochondrial membrane with NADH-ubiquinone oxidoreductase (complex I, CI) and ubiquinol-cytochrome c oxidoreductase (cytochrome b-c1 complex, complex III, CIII), resulting in different assemblies (supercomplex SCI(1)III(2)IV(1) and megacomplex MCI(2)III(2)IV(2)).

It localises to the mitochondrion inner membrane. It participates in energy metabolism; oxidative phosphorylation. Its function is as follows. Component of the cytochrome c oxidase, the last enzyme in the mitochondrial electron transport chain which drives oxidative phosphorylation. The respiratory chain contains 3 multisubunit complexes succinate dehydrogenase (complex II, CII), ubiquinol-cytochrome c oxidoreductase (cytochrome b-c1 complex, complex III, CIII) and cytochrome c oxidase (complex IV, CIV), that cooperate to transfer electrons derived from NADH and succinate to molecular oxygen, creating an electrochemical gradient over the inner membrane that drives transmembrane transport and the ATP synthase. Cytochrome c oxidase is the component of the respiratory chain that catalyzes the reduction of oxygen to water. Electrons originating from reduced cytochrome c in the intermembrane space (IMS) are transferred via the dinuclear copper A center (CU(A)) of subunit 2 and heme A of subunit 1 to the active site in subunit 1, a binuclear center (BNC) formed by heme A3 and copper B (CU(B)). The BNC reduces molecular oxygen to 2 water molecules unsing 4 electrons from cytochrome c in the IMS and 4 protons from the mitochondrial matrix. This chain is Cytochrome c oxidase subunit 6A1, mitochondrial (Cox6a1), found in Rattus norvegicus (Rat).